The sequence spans 363 residues: MNGSPTPKRYSSKSSRLYDDYYNIPYQYSNPTPMNRDYNDVGSRINADKLVPEEYKRNTEFINKAVQQNKELNFKLREKQNEIFELKKIAETLRSKLEKYVDITKKLENQNLNLQIKISDLEKKLSDANSTFKEMRFPKVKDPMVDDDPVSENYDQINVPKHRAPDATGNPRTTNKVSNTSDQDSRLKAIERTLSVLTNYVMRSEDGNNDRMSPLPSPLNTISPINNRLNFQEPKRYNPTVKVNPSDDDIMMYESAELKRVEEEIEELKRKILVRKKHDLRKLSLNNQLQELQSMMDGDDNIKLDNVSKHNHATHRHSSQSSRDYSPSSDACLECSNDLYEKNRVKPENNMSETFATPTPNNX.

The stretch at 62 to 136 (INKAVQQNKE…DANSTFKEMR (75 aa)) forms a coiled coil. Residues 160–184 (PKHRAPDATGNPRTTNKVSNTSDQD) form a disordered region. Polar residues predominate over residues 170–182 (NPRTTNKVSNTSD). A phosphoserine mark is found at Ser-213, Ser-217, Ser-284, and Ser-329. Residues 248 to 297 (DDIMMYESAELKRVEEEIEELKRKILVRKKHDLRKLSLNNQLQELQSMMD) adopt a coiled-coil conformation. Disordered regions lie at residues 310 to 331 (HNHATHRHSSQSSRDYSPSSDA) and 343 to 363 (NRVKPENNMSETFATPTPNNX). Residues 319–329 (SQSSRDYSPSS) are compositionally biased toward low complexity. A compositionally biased stretch (polar residues) spans 349-363 (NNMSETFATPTPNNX).

It belongs to the SPC42 family. Component of the SPC110 complex containing at least CMD1, SPC29, SPC42 and SCP110.

It localises to the nucleus. The protein localises to the cytoplasm. Its subcellular location is the cytoskeleton. The protein resides in the microtubule organizing center. It is found in the spindle pole body. In terms of biological role, forms a polymeric layer at the periphery of the spindle pole body (SPB) central plaque which has an essential function during SPB duplication and may facilitate attachment of the SPB to the nuclear membrane. The chain is Spindle pole body component SPC42 (SPC42) from Saccharomyces cerevisiae (strain FostersB) (Baker's yeast).